A 440-amino-acid chain; its full sequence is Cell division protein FtsA (440 aa).

The segment at 396–440 is disordered; sequence VSSSEEQEQHHHQNEVQQRPKGKQKTQAEHNKQSKMKKLLSMFWE.

It belongs to the FtsA/MreB family. As to quaternary structure, homodimer. Interacts with FtsZ.

It is found in the cell membrane. Its function is as follows. Cell division protein that is required for the assembly of the Z ring. May serve as a membrane anchor for the Z ring. Binds and hydrolyzes ATP. Also involved in sporulation. The polypeptide is Cell division protein FtsA (Bacillus subtilis (strain 168)).